The primary structure comprises 239 residues: MRQSGRKSNQLRPISLELSPLINAEGSCLIKIGNTHVMCSASYDTTVPPFLRNQNRGWITAEYSMLPGSTSQRNKREAVQGKQSGRTQEIQRLIGRTMRSIIDLQKLGERQITIDCDVINADGGTRTAAITGSYVALHLAIRSLMKKRILKVNPLINQVAAVSCGIYKDQPILDLDYLEDSDAEVDSNFVFAGNGNLIEIQGTAEKKPFSEEQFLEMLKLAKAGVAELFKLQNQVLLNL.

Residues Arg-86 and 124–126 (GTR) contribute to the phosphate site.

The protein belongs to the RNase PH family. In terms of assembly, homohexameric ring arranged as a trimer of dimers.

It carries out the reaction tRNA(n+1) + phosphate = tRNA(n) + a ribonucleoside 5'-diphosphate. Functionally, phosphorolytic 3'-5' exoribonuclease that plays an important role in tRNA 3'-end maturation. Removes nucleotide residues following the 3'-CCA terminus of tRNAs; can also add nucleotides to the ends of RNA molecules by using nucleoside diphosphates as substrates, but this may not be physiologically important. Probably plays a role in initiation of 16S rRNA degradation (leading to ribosome degradation) during starvation. This is Ribonuclease PH from Rickettsia bellii (strain RML369-C).